The sequence spans 468 residues: MTKTLPKDFIFGGATAAYQAEGATHTDGKGPVAWDKYLEDNYWYTAEPASDFYHKYPVDLELAEEYGVNGIRISIAWSRIFPTGYGEVNEKGVEFYHKLFAECHKRHVEPFVTLHHFDTPEALHSNGDFLNRENIEHFIDYAAFCFEEFPEVNYWTTFNEIGPIGDGQYLVGKFPPGIKYDLAKVFQSHHNMMVSHARAVKLYKDKGYKGEIGVVHALPTKYPYDPENPADVRAAELEDIIHNKFILDATYLGHYSDKTMEGVNHILAENGGELDLRDEDFQALDAAKDLNDFLGINYYMSDWMQAFDGETEIIHNGKGEKGSSKYQIKGVGRRVAPDYVPRTDWDWIIYPEGLYDQIMRVKNDYPNYKKIYITENGLGYKDEFVDNTVYDDGRIDYVKQHLEVLSDAIADGANVKGYFIWSLMDVFSWSNGYEKRYGLFYVDFDTQERYPKKSAHWYKKLAETQVIE.

5 residues coordinate D-galactose 6-phosphate: Gln19, His116, Asn159, Glu160, and Asn297. Residue Glu160 is the Proton donor of the active site. Glu375 (nucleophile) is an active-site residue. Ser428, Trp429, Lys435, and Tyr437 together coordinate D-galactose 6-phosphate.

Belongs to the glycosyl hydrolase 1 family.

It catalyses the reaction a 6-phospho-beta-D-galactoside + H2O = D-galactose 6-phosphate + an alcohol. It participates in carbohydrate metabolism; lactose degradation; D-galactose 6-phosphate and beta-D-glucose from lactose 6-phosphate: step 1/1. The sequence is that of 6-phospho-beta-galactosidase from Lactococcus lactis subsp. lactis (Streptococcus lactis).